The chain runs to 615 residues: UvrABC system protein C (615 aa).

The GIY-YIG domain maps to 12-91 (EKPGVYIMKD…IKKYKPKYNV (80 aa)). The UVR domain maps to 203–238 (DWLIQKLKEDMKKAAEELRFEEAARIRDQIFAIERT).

The protein belongs to the UvrC family. In terms of assembly, interacts with UvrB in an incision complex.

It localises to the cytoplasm. Functionally, the UvrABC repair system catalyzes the recognition and processing of DNA lesions. UvrC both incises the 5' and 3' sides of the lesion. The N-terminal half is responsible for the 3' incision and the C-terminal half is responsible for the 5' incision. The sequence is that of UvrABC system protein C from Thermoanaerobacter sp. (strain X514).